Consider the following 323-residue polypeptide: Aldo-keto reductase family 1 member C2 (323 aa).

Residues 20–24 (GFGTY) and aspartate 50 each bind NADP(+). Residue tyrosine 24 coordinates substrate. The active-site Proton donor is tyrosine 55. Position 117 (histidine 117) interacts with substrate. NADP(+) is bound by residues 166–167 (SN), glutamine 190, and 216–222 (YSALGSH). Substrate is bound by residues histidine 222 and tryptophan 227. An NADP(+)-binding site is contributed by 270 to 280 (KSYNEQRIRQN).

It belongs to the aldo/keto reductase family. As to expression, expressed in fetal testes. Expressed in fetal and adult adrenal glands.

It is found in the cytoplasm. It localises to the cytosol. It catalyses the reaction a 3alpha-hydroxysteroid + NADP(+) = a 3-oxosteroid + NADPH + H(+). It carries out the reaction a 3alpha-hydroxysteroid + NAD(+) = a 3-oxosteroid + NADH + H(+). The catalysed reaction is 5alpha-androstane-3alpha,17beta-diol + NADP(+) = 17beta-hydroxy-5alpha-androstan-3-one + NADPH + H(+). The enzyme catalyses 5alpha-androstane-3alpha,17beta-diol + NAD(+) = 17beta-hydroxy-5alpha-androstan-3-one + NADH + H(+). It catalyses the reaction 5alpha-androstane-3alpha,17beta-diol + NAD(+) = androsterone + NADH + H(+). It carries out the reaction 17beta-estradiol + NADP(+) = estrone + NADPH + H(+). The catalysed reaction is 17beta-estradiol + NAD(+) = estrone + NADH + H(+). The enzyme catalyses (20S)-hydroxypregn-4-en-3-one + NADP(+) = progesterone + NADPH + H(+). It catalyses the reaction (20S)-hydroxypregn-4-en-3-one + NAD(+) = progesterone + NADH + H(+). It carries out the reaction androsterone + NADP(+) = 5alpha-androstan-3,17-dione + NADPH + H(+). The catalysed reaction is (3beta,5alpha,17beta)-3-hydroxy-androstan-17-yl sulfate + NADP(+) = 5alpha-dihydrotestosterone sulfate + NADPH + H(+). The enzyme catalyses (1R,2R)-1,2-dihydrobenzene-1,2-diol + NADP(+) = catechol + NADPH + H(+). It catalyses the reaction (S)-indan-1-ol + NAD(+) = indan-1-one + NADH + H(+). It carries out the reaction (S)-indan-1-ol + NADP(+) = indan-1-one + NADPH + H(+). The protein operates within steroid metabolism. Inhibited by hexestrol with an IC(50) of 2.8 uM, 1,10-phenanthroline with an IC(50) of 2100 uM, 1,7-phenanthroline with an IC(50) of 1500 uM, flufenamic acid with an IC(50) of 0.9 uM, indomethacin with an IC(50) of 75 uM, ibuprofen with an IC(50) of 6.9 uM, lithocholic acid with an IC(50) of 0.07 uM, ursodeoxycholic acid with an IC(50) of 0.08 uM and chenodeoxycholic acid with an IC(50) of 0.13 uM. The oxidation reaction is inhibited by low micromolar concentrations of NADPH. In terms of biological role, cytosolic aldo-keto reductase that catalyzes the NADH and NADPH-dependent reduction of ketosteroids to hydroxysteroids. Most probably acts as a reductase in vivo since the oxidase activity measured in vitro is inhibited by physiological concentrations of NADPH. Displays a broad positional specificity acting on positions 3, 17 and 20 of steroids and regulates the metabolism of hormones like estrogens and androgens. Works in concert with the 5-alpha/5-beta-steroid reductases to convert steroid hormones into the 3-alpha/5-alpha and 3-alpha/5-beta-tetrahydrosteroids. Catalyzes the inactivation of the most potent androgen 5-alpha-dihydrotestosterone (5-alpha-DHT) to 5-alpha-androstane-3-alpha,17-beta-diol (3-alpha-diol). Also specifically able to produce 17beta-hydroxy-5alpha-androstan-3-one/5alphaDHT. May also reduce conjugated steroids such as 5alpha-dihydrotestosterone sulfate. Displays affinity for bile acids. The sequence is that of Aldo-keto reductase family 1 member C2 (AKR1C2) from Homo sapiens (Human).